Consider the following 216-residue polypeptide: Alanyl-tRNA editing protein AlaX-M (216 aa).

Positions 99, 103, and 182 each coordinate Zn(2+).

This sequence belongs to the class-II aminoacyl-tRNA synthetase family. Editing domain AlaX-M subfamily. Monomer. Requires Zn(2+) as cofactor.

It is found in the cytoplasm. In terms of biological role, functions in trans to edit the amino acid moiety from mischarged charged Gly-tRNA(Ala) and Ser-tRNA(Ala). The protein is Alanyl-tRNA editing protein AlaX-M (alaXM) of Pyrococcus horikoshii (strain ATCC 700860 / DSM 12428 / JCM 9974 / NBRC 100139 / OT-3).